The chain runs to 449 residues: Probable magnetosome protein Mms48 (449 aa).

The N-terminal stretch at 1 to 18 is a signal peptide; that stretch reads MLLRLIVLLIFMSPVVFA. The chain crosses the membrane as a helical span at residues 40–60; it reads SNMPVLLAVILVVFLIFSALS. The stretch at 323–356 is one TPR repeat; sequence PDGHLAAGEAAFAVQKWGVARRHIMAALKIAPDA.

It localises to the magnetosome membrane. Overexpression in wild-type cells increases the number of cells with double magnetosome chains significantly. The 4 genes of this operon collectively influence magnetosome size and number. The sequence is that of Probable magnetosome protein Mms48 from Magnetospirillum gryphiswaldense (strain DSM 6361 / JCM 21280 / NBRC 15271 / MSR-1).